Consider the following 540-residue polypeptide: Probable H/ACA ribonucleoprotein complex subunit 4 (540 aa).

The tract at residues 1–24 (MTTDKKSKSKSSEKSTQEVEQVIK) is disordered. Asp109 acts as the Nucleophile in catalysis. The 76-residue stretch at 280-355 (YKRIVVKDSA…VVATIKRVIM (76 aa)) folds into the PUA domain. A disordered region spans residues 414–540 (SPVESMNVDT…DKKEKKKSKN (127 aa)). Positions 448 to 494 (KKEKKDKKEKKKDSSDDESEEEKSSKKDKKEKKEKKEKKEKKSSKDD) form a coiled coil. Over residues 473–489 (KKDKKEKKEKKEKKEKK) the composition is skewed to basic residues. Basic and acidic residues-rich tracts occupy residues 490-503 (SSKDDSDDESSKKE) and 513-528 (SDKDSDSEKESSDKKD). The span at 529–540 (KKDKKEKKKSKN) shows a compositional bias: basic residues.

The protein belongs to the pseudouridine synthase TruB family. In terms of assembly, component of the small nucleolar ribonucleoprotein particles containing H/ACA-type snoRNAs (H/ACA snoRNPs).

It localises to the nucleus. The protein localises to the nucleolus. It carries out the reaction a uridine in RNA = a pseudouridine in RNA. In terms of biological role, plays a central role in ribosomal RNA processing. Probable catalytic subunit of H/ACA small nucleolar ribonucleoprotein (H/ACA snoRNP) complex, which catalyzes pseudouridylation of rRNA. This involves the isomerization of uridine such that the ribose is subsequently attached to C5, instead of the normal N1. Pseudouridine ('psi') residues may serve to stabilize the conformation of rRNAs. The sequence is that of Probable H/ACA ribonucleoprotein complex subunit 4 (nola4) from Dictyostelium discoideum (Social amoeba).